We begin with the raw amino-acid sequence, 213 residues long: MKILLIGPPGSGKGSVSELLTKNNTLKHVSTGNLFRAILKEDSELARKIKEINVSGGKLVPDEITNQVAKSAIDELIKNEQSFILDGYPRTINQALALEQYCNLDYIFYLDIDHQELMKRLTGRWMCPKCAGIYNIHFKKPQVHGLCDNDQATLYQRADDHADAVSIRLDEYDKLTLPLIKHYETNPRFIKINANQPIEDVYKNINNYLKQNK.

ATP is bound at residue 10 to 15 (GSGKGS). An NMP region spans residues 30-60 (STGNLFRAILKEDSELARKIKEINVSGGKLV). AMP contacts are provided by residues Thr31, Arg36, 58–60 (KLV), 87–90 (GYPR), and Gln94. Positions 123-160 (GRWMCPKCAGIYNIHFKKPQVHGLCDNDQATLYQRADD) are LID. Position 124 (Arg124) interacts with ATP. 2 residues coordinate Zn(2+): Cys127 and Cys130. 133–134 (IY) is an ATP binding site. Cys147 and Asp150 together coordinate Zn(2+). The AMP site is built by Arg157 and Arg168. Gln196 contributes to the ATP binding site.

The protein belongs to the adenylate kinase family. As to quaternary structure, monomer.

It is found in the cytoplasm. The enzyme catalyses AMP + ATP = 2 ADP. It functions in the pathway purine metabolism; AMP biosynthesis via salvage pathway; AMP from ADP: step 1/1. Its function is as follows. Catalyzes the reversible transfer of the terminal phosphate group between ATP and AMP. Plays an important role in cellular energy homeostasis and in adenine nucleotide metabolism. This is Adenylate kinase from Ureaplasma parvum serovar 3 (strain ATCC 27815 / 27 / NCTC 11736).